Reading from the N-terminus, the 52-residue chain is Insulin (52 aa).

3 disulfide bridges follow: cysteine 7/cysteine 38, cysteine 19/cysteine 51, and cysteine 37/cysteine 42.

The protein belongs to the insulin family. In terms of assembly, heterodimer of a B chain and an A chain linked by two disulfide bonds.

It is found in the secreted. Functionally, insulin decreases blood glucose concentration. It increases cell permeability to monosaccharides, amino acids and fatty acids. It accelerates glycolysis, the pentose phosphate cycle, and glycogen synthesis in liver. This is Insulin (ins) from Amia calva (Bowfin).